The following is a 375-amino-acid chain: 1-deoxy-D-xylulose 5-phosphate reductoisomerase (375 aa).

Residues T12, G13, S14, I15, N39, and N115 each coordinate NADPH. 1-deoxy-D-xylulose 5-phosphate is bound at residue K116. E117 is a binding site for NADPH. Residue D141 coordinates Mn(2+). Residues S142, E143, S163, and H186 each coordinate 1-deoxy-D-xylulose 5-phosphate. E143 lines the Mn(2+) pocket. An NADPH-binding site is contributed by G192. Positions 199, 204, 205, and 208 each coordinate 1-deoxy-D-xylulose 5-phosphate. Mn(2+) is bound at residue E208.

Belongs to the DXR family. Requires Mg(2+) as cofactor. Mn(2+) is required as a cofactor.

The catalysed reaction is 2-C-methyl-D-erythritol 4-phosphate + NADP(+) = 1-deoxy-D-xylulose 5-phosphate + NADPH + H(+). The protein operates within isoprenoid biosynthesis; isopentenyl diphosphate biosynthesis via DXP pathway; isopentenyl diphosphate from 1-deoxy-D-xylulose 5-phosphate: step 1/6. In terms of biological role, catalyzes the NADPH-dependent rearrangement and reduction of 1-deoxy-D-xylulose-5-phosphate (DXP) to 2-C-methyl-D-erythritol 4-phosphate (MEP). In Thermotoga neapolitana (strain ATCC 49049 / DSM 4359 / NBRC 107923 / NS-E), this protein is 1-deoxy-D-xylulose 5-phosphate reductoisomerase.